Reading from the N-terminus, the 324-residue chain is Beta-ketoacyl-[acyl-carrier-protein] synthase III (324 aa).

Catalysis depends on residues Cys-112 and His-249. An ACP-binding region spans residues 250–254 (QANDR). The active site involves Asn-279.

This sequence belongs to the thiolase-like superfamily. FabH family. In terms of assembly, homodimer.

It localises to the cytoplasm. It carries out the reaction malonyl-[ACP] + acetyl-CoA + H(+) = 3-oxobutanoyl-[ACP] + CO2 + CoA. It functions in the pathway lipid metabolism; fatty acid biosynthesis. Functionally, catalyzes the condensation reaction of fatty acid synthesis by the addition to an acyl acceptor of two carbons from malonyl-ACP. Catalyzes the first condensation reaction which initiates fatty acid synthesis and may therefore play a role in governing the total rate of fatty acid production. Possesses both acetoacetyl-ACP synthase and acetyl transacylase activities. Its substrate specificity determines the biosynthesis of branched-chain and/or straight-chain of fatty acids. The polypeptide is Beta-ketoacyl-[acyl-carrier-protein] synthase III (Streptococcus pneumoniae serotype 19F (strain G54)).